The primary structure comprises 526 residues: Carotenoid cleavage oxygenase 1 (526 aa).

The disordered stretch occupies residues 1-33 (MAEYVFSDAPKDSHGNGVKDAVPGKQPEELPPA). Residues Y133 and K164 each contribute to the piceatannol site. Trans-resveratrol contacts are provided by Y133 and K164. 3 residues coordinate Fe cation: H197, H248, and H313. E383 is a binding site for piceatannol. A trans-resveratrol-binding site is contributed by E383. Position 510 (H510) interacts with Fe cation.

It belongs to the carotenoid oxygenase family. Fe(2+) serves as cofactor.

It catalyses the reaction trans-resveratrol + O2 = 3,5-dihydroxybenzaldehyde + 4-hydroxybenzaldehyde. It carries out the reaction piceatannol + O2 = 3,5-dihydroxybenzaldehyde + 3,4-dihydroxybenzaldehyde. Its function is as follows. Dioxygenase that cleaves the interphenyl C-alpha-C-beta double bond of resveratrol to yield 3,5-dihydroxybenzaldehyde and 4-hydroxybenzaldehyde. Also cleaves piceatannol, a compound that differs from resveratrol only in the occurrence of an additional hydroxyl group, which leads to the production of 3,4-dihydroxybenzaldehyde and 3,5-hydroxybenzaldehyde. Is not able to cleave trans-stilbene, 4-monohydroxy-trans-stilbene, 3,5-dihydroxy-trans-stilbene (pinosylvin), trismethoxy-resveratrol, and 3,3',5-trihydroxy-4'-methoxystilbene-3-O-beta-D-glucoside. Is not involved in carotenoid metabolism. The chain is Carotenoid cleavage oxygenase 1 from Neurospora crassa (strain ATCC 24698 / 74-OR23-1A / CBS 708.71 / DSM 1257 / FGSC 987).